Consider the following 382-residue polypeptide: Sphingosine 1-phosphate receptor 1 (382 aa).

Over 1 to 46 (MGSTRIPLVKALHSPVSDYVNYDIIVRHYNYTGKLKISADKDNGIK) the chain is Extracellular. Position 10 is an N6-acetyllysine (Lys-10). N-linked (GlcNAc...) asparagine glycosylation occurs at Asn-30. A helical membrane pass occupies residues 47 to 68 (LISVVFILICCFIILENIFVLL). At 69–82 (TIWKTKKFHRPMYY) the chain is on the cytoplasmic side. The chain crosses the membrane as a helical span at residues 83-104 (FIGNLALSDLLAGVAYTANLLL). The Extracellular segment spans residues 105–116 (SGATTYKLTPAQ). Residues 117–138 (WFLREGSMFVALSASVFSLLAI) traverse the membrane as a helical segment. 120 to 121 (RE) contributes to the sphing-4-enine 1-phosphate binding site. Residues 139 to 160 (AIERYITMLKMKLHNGSNRFRS) are Cytoplasmic-facing. A helical membrane pass occupies residues 161–182 (FLLISACWVISLILGGLPIMGW). Residues 183–196 (NCISTLPSCSTVLP) lie on the Extracellular side of the membrane. Cys-184 and Cys-191 are joined by a disulfide. A helical membrane pass occupies residues 197–224 (LYHKHYILFCTTVFTLLLLSIVILYCRI). The Cytoplasmic segment spans residues 225–257 (YSLVRTRSRRLTFRKNISKASRSSEKSLALLKT). At Thr-236 the chain carries Phosphothreonine; by PKB/AKT1. A helical transmembrane segment spans residues 258 to 278 (VIIVLGVFIACWAPLFILLLL). A sphing-4-enine 1-phosphate-binding site is contributed by 265 to 269 (FIACW). Topologically, residues 279–289 (DVGCKVKTCDI) are extracellular. A disulfide bridge links Cys-282 with Cys-287. A helical membrane pass occupies residues 290–310 (LFRTEYFLVLAVLNSGTNPII). Residues 311-382 (YTLSNKEMRR…MSSGNVNSSS (72 aa)) are Cytoplasmic-facing. Cys-328 carries the S-palmitoyl cysteine lipid modification. The disordered stretch occupies residues 349–382 (EFSRSKSDNSSHPQKDDGDNPETIMSSGNVNSSS). A phosphoserine mark is found at Ser-351 and Ser-353. Basic and acidic residues predominate over residues 351-366 (SRSKSDNSSHPQKDDG). Polar residues predominate over residues 371-382 (TIMSSGNVNSSS).

The protein belongs to the G-protein coupled receptor 1 family. In terms of assembly, interacts with GNAI1 and GNAI3. Interacts with CD69; this interaction promotes S1PR1 degradation. Post-translationally, S1P-induced endothelial cell migration requires the PKB/AKT1-mediated phosphorylation of the third intracellular loop at the Thr-236 residue. Palmitoylated by ZDHHC5. Palmitoylation is required for targeting to plasma membrane, enabling G(i) coupling.

It localises to the cell membrane. Its subcellular location is the endosome. It is found in the membrane raft. Functionally, G-protein coupled receptor for the bioactive lysosphingolipid sphingosine 1-phosphate (S1P) that seems to be coupled to the G(i) subclass of heteromeric G proteins. Signaling leads to the activation of RAC1, SRC, PTK2/FAK1 and MAP kinases. Plays an important role in cell migration, probably via its role in the reorganization of the actin cytoskeleton and the formation of lamellipodia in response to stimuli that increase the activity of the sphingosine kinase SPHK1. Required for normal chemotaxis toward sphingosine 1-phosphate. Required for normal embryonic heart development and normal cardiac morphogenesis. Plays an important role in the regulation of sprouting angiogenesis and vascular maturation. Inhibits sprouting angiogenesis to prevent excessive sprouting during blood vessel development. Required for normal egress of mature T-cells from the thymus into the blood stream and into peripheral lymphoid organs. Plays a role in the migration of osteoclast precursor cells, the regulation of bone mineralization and bone homeostasis. Plays a role in responses to oxidized 1-palmitoyl-2-arachidonoyl-sn-glycero-3-phosphocholine by pulmonary endothelial cells and in the protection against ventilator-induced lung injury. In Bos taurus (Bovine), this protein is Sphingosine 1-phosphate receptor 1 (S1PR1).